The chain runs to 361 residues: D-amino-acid oxidase (361 aa).

The signal sequence occupies residues 1-22 (MSNTIVVVGAGVIGLTSALLLS). FAD-binding residues include A10, I13, K34, H35, A45, S46, G50, and N52. 2 N-linked (GlcNAc...) asparagine glycosylation sites follow: N193 and N222. Positions 242, 258, and 305 each coordinate (R)-lactate. Positions 242, 258, and 305 each coordinate anthranilate. R305, S332, G335, Y336, and Q337 together coordinate FAD. The Microbody targeting signal signature appears at 359–361 (SKL).

It belongs to the DAMOX/DASOX family. Requires FAD as cofactor. The N-terminus is blocked.

The protein resides in the peroxisome matrix. The catalysed reaction is a D-alpha-amino acid + O2 + H2O = a 2-oxocarboxylate + H2O2 + NH4(+). In terms of biological role, catalyzes the oxidative deamination of D-amino acids with broad substrate specificity. Enables the organism to utilize D-amino acids as a source of nutrients. This is D-amino-acid oxidase from Fusarium vanettenii (Neocosmospora pisi).